The chain runs to 73 residues: Dermaseptin-H4 (73 aa).

An N-terminal signal peptide occupies residues 1 to 22 (MAFMKKSLFLVLFLGMVSLSIC). A propeptide spanning residues 23 to 43 (EEEKRENEDEAKQEDDEQSEM) is cleaved from the precursor. Positions 25–45 (EKRENEDEAKQEDDEQSEMKR) are disordered. The segment covering 30-40 (EDEAKQEDDEQ) has biased composition (acidic residues). At Leu-70 the chain carries Leucine amide. Positions 72–73 (EQ) are excised as a propeptide.

Expressed by the skin glands.

It is found in the secreted. Its function is as follows. Has antibacterial activity against the Gram-negative bacteria E.coli ATCC 11775 (MIC=0.8 uM), and the Gram-positive bacteria S.aureus ATCC 12600 (MIC=0.4 uM) and M.luteus ATCC 49732 (MIC=0.8 uM). Does not inhibit the growth of the fungus C.albicans. Probably acts by disturbing membrane functions with its amphipathic structure. This chain is Dermaseptin-H4, found in Pithecopus azureus (Orange-legged monkey tree frog).